Consider the following 388-residue polypeptide: Chorismate synthase (388 aa).

NADP(+) contacts are provided by arginine 39 and arginine 45. Residues 130–132 (RSS), 251–252 (NA), glycine 296, 311–315 (KPIPT), and arginine 337 contribute to the FMN site.

It belongs to the chorismate synthase family. Homotetramer. FMNH2 is required as a cofactor.

It catalyses the reaction 5-O-(1-carboxyvinyl)-3-phosphoshikimate = chorismate + phosphate. It participates in metabolic intermediate biosynthesis; chorismate biosynthesis; chorismate from D-erythrose 4-phosphate and phosphoenolpyruvate: step 7/7. In terms of biological role, catalyzes the anti-1,4-elimination of the C-3 phosphate and the C-6 proR hydrogen from 5-enolpyruvylshikimate-3-phosphate (EPSP) to yield chorismate, which is the branch point compound that serves as the starting substrate for the three terminal pathways of aromatic amino acid biosynthesis. This reaction introduces a second double bond into the aromatic ring system. The protein is Chorismate synthase of Lactococcus lactis subsp. cremoris (strain MG1363).